The sequence spans 236 residues: Lectin CPL (236 aa).

Glutamate 8 and aspartate 10 together coordinate Mn(2+). The Ca(2+) site is built by aspartate 10, tyrosine 12, asparagine 14, and aspartate 19. An a carbohydrate-binding site is contributed by asparagine 14. Mn(2+)-binding residues include aspartate 19 and histidine 24. A carbohydrate contacts are provided by residues 99–100 (VY), aspartate 207, and arginine 227.

It belongs to the leguminous lectin family. Homotetramer; dimer of dimers. Post-translationally, concanavalin A-like lectins of the Diocleinae subtribe undergo proteolytic processing referred to as circular permutation. The propeptide is split into an N-terminal and a C-terminal part, the gamma and beta chain, respectively. These are then religated in beta-gamma order to form the mature alpha chain. The beta and gamma chains can often be detected in cell extracts. Residues 1-118 of the mature chain, as displayed here, probably constitute the beta chain in the propeptide, residues 119-236 the gamma chain.

Functionally, D-mannose/D-glucose-binding lectin that also binds derivative alpha-methyl-D-mannppyranoside. Has hemagglutinating activity towards rabbit erythrocytes. This is Lectin CPL from Bionia pedicellata (Camptosema pedicellatum).